The chain runs to 464 residues: tRNA(Ile2) 2-agmatinylcytidine synthetase TiaS (464 aa).

Belongs to the TiaS family.

The protein localises to the cytoplasm. It carries out the reaction cytidine(34) in tRNA(Ile2) + agmatine + ATP + H2O = 2-agmatinylcytidine(34) in tRNA(Ile2) + AMP + 2 phosphate + 2 H(+). Its function is as follows. ATP-dependent agmatine transferase that catalyzes the formation of 2-agmatinylcytidine (agm2C) at the wobble position (C34) of tRNA(Ile2), converting the codon specificity from AUG to AUA. This chain is tRNA(Ile2) 2-agmatinylcytidine synthetase TiaS, found in Ignisphaera aggregans (strain DSM 17230 / JCM 13409 / AQ1.S1).